A 132-amino-acid chain; its full sequence is Small ribosomal subunit protein uS8 (132 aa).

It belongs to the universal ribosomal protein uS8 family. In terms of assembly, part of the 30S ribosomal subunit. Contacts proteins S5 and S12.

One of the primary rRNA binding proteins, it binds directly to 16S rRNA central domain where it helps coordinate assembly of the platform of the 30S subunit. This chain is Small ribosomal subunit protein uS8, found in Limosilactobacillus reuteri (strain DSM 20016) (Lactobacillus reuteri).